A 555-amino-acid polypeptide reads, in one-letter code: Glutamine--tRNA ligase (555 aa).

Positions 35 to 45 (PEPNGYLHIGH) match the 'HIGH' region motif. ATP contacts are provided by residues 36–38 (EPN) and 42–48 (HIGHAKS). Residues aspartate 68 and tyrosine 213 each contribute to the L-glutamine site. Residues threonine 232, 262–263 (RL), and 270–272 (MSK) each bind ATP. The 'KMSKS' region motif lies at 269 to 273 (VMSKR).

Belongs to the class-I aminoacyl-tRNA synthetase family. As to quaternary structure, monomer.

Its subcellular location is the cytoplasm. It carries out the reaction tRNA(Gln) + L-glutamine + ATP = L-glutaminyl-tRNA(Gln) + AMP + diphosphate. The polypeptide is Glutamine--tRNA ligase (Photobacterium profundum (strain SS9)).